Consider the following 220-residue polypeptide: Iron-sulfur cluster repair protein YtfE (220 aa).

The protein belongs to the RIC family. YtfE subfamily. Homodimer.

It is found in the cytoplasm. Di-iron-containing protein involved in the repair of iron-sulfur clusters damaged by oxidative and nitrosative stress conditions. The polypeptide is Iron-sulfur cluster repair protein YtfE (Escherichia coli O81 (strain ED1a)).